A 571-amino-acid polypeptide reads, in one-letter code: Glutamine--tRNA ligase (571 aa).

The 'HIGH' region signature appears at 35-45; that stretch reads PEPNGYLHIGH. ATP contacts are provided by residues 36–38 and 42–48; these read EPN and HIGHAKS. L-glutamine contacts are provided by Asp-68 and Tyr-213. ATP-binding positions include Thr-232, 262–263, and 270–272; these read RL and LSK. Positions 269–273 match the 'KMSKS' region motif; sequence ILSKR.

The protein belongs to the class-I aminoacyl-tRNA synthetase family. In terms of assembly, monomer.

It localises to the cytoplasm. The catalysed reaction is tRNA(Gln) + L-glutamine + ATP = L-glutaminyl-tRNA(Gln) + AMP + diphosphate. The chain is Glutamine--tRNA ligase from Buchnera aphidicola subsp. Acyrthosiphon pisum (strain 5A).